Here is a 905-residue protein sequence, read N- to C-terminus: Translation initiation factor IF-2 (905 aa).

Over residues H50–E62 the composition is skewed to basic and acidic residues. A disordered region spans residues H50 to L306. Residues K63–K75 are compositionally biased toward low complexity. The segment covering G89–A125 has biased composition (pro residues). The segment covering P161–P171 has biased composition (low complexity). The segment covering G233–G276 has biased composition (gly residues). Basic residues predominate over residues R280–R290. Basic and acidic residues predominate over residues H291–G302. Residues K401 to T575 form the tr-type G domain. The tract at residues G410 to T417 is G1. Position 410 to 417 (G410 to T417) interacts with GTP. Residues G435–G439 form a G2 region. The segment at D460–G463 is G3. Residues D460–H464 and N514–D517 contribute to the GTP site. The interval N514–D517 is G4. The interval S550 to K552 is G5.

It belongs to the TRAFAC class translation factor GTPase superfamily. Classic translation factor GTPase family. IF-2 subfamily.

The protein resides in the cytoplasm. Its function is as follows. One of the essential components for the initiation of protein synthesis. Protects formylmethionyl-tRNA from spontaneous hydrolysis and promotes its binding to the 30S ribosomal subunits. Also involved in the hydrolysis of GTP during the formation of the 70S ribosomal complex. The polypeptide is Translation initiation factor IF-2 (Corynebacterium aurimucosum (strain ATCC 700975 / DSM 44827 / CIP 107346 / CN-1) (Corynebacterium nigricans)).